A 359-amino-acid chain; its full sequence is MKKTAIALVVAGLAAASVAQAAPQENTFYAGVKAGQGSFHDGINNNGAIKKGLSSSNYGYRRNTFTYGVFGGYQILNQDNFGLAAELGYDDFGRAKLREAGKPKAKHTNHGAYLSLKGSYEVLDGLDVYGKAGVALVRSDYKFYEDANGTRDHKKGRHTARASGLFAVGAEYAVLPELAVRLEYQWLTRVGKYRPQDKPNTAINYNPWIGCINAGISYRFGQGEAPVVAAPEMVSKTFSLNSDVTFAFGKANLKPQAQATLDSVYGEISQVKSRKVAVAGYTNRIGSDAFNVKLSQERADSVANYFVAKGVAADAISATGYGEANPVTGATCDQVKGRKALIACLAPDRRVEIAVNGTK.

A signal peptide spans 1–21 (MKKTAIALVVAGLAAASVAQA). 8 beta stranded membrane passes run 27-37 (TFYAGVKAGQG), 64-75 (TFTYGVFGGYQI), 83-91 (LAAELGYDD), 110-121 (HGAYLSLKGSYE), 126-134 (LDVYGKAGV), 164-173 (GLFAVGAEYA), 178-185 (LAVRLEYQ), and 211-219 (CINAGISYR). Residues 233–359 (MVSKTFSLNS…RVEIAVNGTK (127 aa)) form the OmpA-like domain. A disulfide bridge links cysteine 332 with cysteine 344.

Belongs to the outer membrane OOP (TC 1.B.6) superfamily. OmpA family. In terms of assembly, monomer and homodimer.

Its subcellular location is the cell outer membrane. It localises to the fimbrium. Functionally, acts as a fimbriae subunit, allowing adhesion to host cells. With TolR probably plays a role in maintaining the position of the peptidoglycan cell wall in the periplasm. Acts as a porin with low permeability that allows slow penetration of small solutes; an internal gate slows down solute passage. The sequence is that of Outer membrane protein P5 from Haemophilus influenzae.